Consider the following 322-residue polypeptide: Putative A-type inclusion protein (322 aa).

The disordered stretch occupies residues 284–322 (LTTEATGSVEVAPPSTDVTEPISDVTPSVDVEPEHPPAF).

Belongs to the chordopoxvirinae A26 protein family.

Its function is as follows. Encodes a truncated version of poxvirus A26 protein. The chain is Putative A-type inclusion protein from Vaccinia virus (strain Copenhagen) (VACV).